We begin with the raw amino-acid sequence, 58 residues long: Cecropin-B (58 aa).

A signal peptide spans 1-21 (ILSFVFACLLALSAVSAAPEP).

Belongs to the cecropin family.

It is found in the secreted. Functionally, cecropins have lytic and antibacterial activity against several Gram-positive and Gram-negative bacteria. This Spodoptera litura (Asian cotton leafworm) protein is Cecropin-B (CECB).